We begin with the raw amino-acid sequence, 66 residues long: Protein I177L (66 aa).

Belongs to the asfivirus I177L family.

The protein resides in the virion. This chain is Protein I177L, found in African swine fever virus (isolate Tick/Malawi/Lil 20-1/1983) (ASFV).